A 211-amino-acid chain; its full sequence is MISYYFQGFALGVAMILPLGPQNAFVMNQGIRRQYHLMIALLCALSDLVLISAGIFGGSALLMQSPWLLALVTWGGVAFLLWYGFGALKTAMSSNLELASAEVMKQGRWKIIATMLAVTWLNPHVYLDTFVVLGSLGGQLAMEPKRWFALGTISASFLWFFGLALLAAWLAPRLRTAKAQRIINILVGVVMWLIAFQLAREGVAHMHALFN.

Helical transmembrane passes span 1-21 (MISY…PLGP), 37-57 (LMIA…GIFG), 68-88 (LLAL…FGAL), 111-131 (IIAT…DTFV), 147-167 (WFAL…ALLA), and 179-199 (AQRI…FQLA).

This sequence belongs to the LysE/ArgO transporter (TC 2.A.75) family.

It localises to the cell inner membrane. The enzyme catalyses L-arginine(in) = L-arginine(out). Involved in the export of arginine. Important to control the intracellular level of arginine and the correct balance between arginine and lysine. This Salmonella paratyphi A (strain ATCC 9150 / SARB42) protein is Arginine exporter protein ArgO.